Consider the following 542-residue polypeptide: GMP synthase [glutamine-hydrolyzing] (542 aa).

Residues 28 to 218 (MIVILDFGSQ…VYHICECEPT (191 aa)) enclose the Glutamine amidotransferase type-1 domain. Cys105 (nucleophile) is an active-site residue. Catalysis depends on residues His192 and Glu194. The 199-residue stretch at 219–417 (WTTEAFVEEA…IGLPEEIVRR (199 aa)) folds into the GMPS ATP-PPase domain. 246–252 (SGGVDSS) contributes to the ATP binding site.

In terms of assembly, homodimer.

It carries out the reaction XMP + L-glutamine + ATP + H2O = GMP + L-glutamate + AMP + diphosphate + 2 H(+). It participates in purine metabolism; GMP biosynthesis; GMP from XMP (L-Gln route): step 1/1. Functionally, catalyzes the synthesis of GMP from XMP. The chain is GMP synthase [glutamine-hydrolyzing] from Gloeothece citriformis (strain PCC 7424) (Cyanothece sp. (strain PCC 7424)).